The primary structure comprises 518 residues: MKTAEKLGIIGTTISIFGIGFGWGVFPWLIRMQIGRVSLSPGSETREFWEKIPFPIDFKIHIFNITNHVEVQNEGKIPNLQEIGPYYYKEWKEKSEMIDYENDDSITFFMKNTWFDNKEKTLPLTGDEMVIIPNPILVGLITAAEREKKGVLPMINKAIPILFNKPDSVFLKIKVYDLLFGGIIFNCTTKDFSASAVCAVLKKEAPFLETVSRSVFKFSILNQKNGTEEPLKLQIKRGIKDYTEVGKVIGANGKNKLTNWRGRPCNNLEGTDGTIFPSDISEHQDIWSFNLELCRSIPAKFVRKSEYKGIPAFRYNVTIGDTSTDPSLKCLCINDTFCWKKGAMELLKCSGLPVVATLPHFYDSHEDFLNGVKGLSPNEENHSIFFDIEPMTGTPLYAKKRIQFSFPLGKINKIDLTKNLPDTLLPFLWVEESIELPDYLIDKLNSELFRILQFLDVIKWVITLFGAGVVSGGVGLYYKEKNSLPITPTSSATSKKIDNPTDKTTTHELGHTNFGYIN.

Residues 1–8 (MKTAEKLG) are Cytoplasmic-facing. The chain crosses the membrane as a helical span at residues 9 to 29 (IIGTTISIFGIGFGWGVFPWL). Residues 30-456 (IRMQIGRVSL…ELFRILQFLD (427 aa)) lie on the Extracellular side of the membrane. Asparagine 64, asparagine 186, asparagine 225, asparagine 316, asparagine 334, and asparagine 381 each carry an N-linked (GlcNAc...) asparagine glycan. 3 disulfides stabilise this stretch: cysteine 265/cysteine 330, cysteine 294/cysteine 349, and cysteine 332/cysteine 338. A helical transmembrane segment spans residues 457 to 477 (VIKWVITLFGAGVVSGGVGLY). The Cytoplasmic portion of the chain corresponds to 478 to 518 (YKEKNSLPITPTSSATSKKIDNPTDKTTTHELGHTNFGYIN).

It belongs to the CD36 family.

Its subcellular location is the cell membrane. Plays an olfactory role that is not restricted to pheromone sensitivity. The chain is Sensory neuron membrane protein 1 from Pediculus humanus subsp. corporis (Body louse).